The following is a 176-amino-acid chain: 3-hydroxydecanoyl-[acyl-carrier-protein] dehydratase (176 aa).

H71 is a catalytic residue.

Belongs to the thioester dehydratase family. FabA subfamily. As to quaternary structure, homodimer.

It localises to the cytoplasm. The enzyme catalyses a (3R)-hydroxyacyl-[ACP] = a (2E)-enoyl-[ACP] + H2O. It carries out the reaction (3R)-hydroxydecanoyl-[ACP] = (2E)-decenoyl-[ACP] + H2O. It catalyses the reaction (2E)-decenoyl-[ACP] = (3Z)-decenoyl-[ACP]. It functions in the pathway lipid metabolism; fatty acid biosynthesis. In terms of biological role, necessary for the introduction of cis unsaturation into fatty acids. Catalyzes the dehydration of (3R)-3-hydroxydecanoyl-ACP to E-(2)-decenoyl-ACP and then its isomerization to Z-(3)-decenoyl-ACP. Can catalyze the dehydratase reaction for beta-hydroxyacyl-ACPs with saturated chain lengths up to 16:0, being most active on intermediate chain length. This Rhodopseudomonas palustris (strain BisA53) protein is 3-hydroxydecanoyl-[acyl-carrier-protein] dehydratase.